A 423-amino-acid chain; its full sequence is Serine--tRNA ligase (423 aa).

231 to 233 lines the L-serine pocket; sequence TAE. Position 262–264 (262–264) interacts with ATP; that stretch reads RSE. Glutamate 285 provides a ligand contact to L-serine. An ATP-binding site is contributed by 349–352; sequence EISS. Serine 384 contributes to the L-serine binding site.

This sequence belongs to the class-II aminoacyl-tRNA synthetase family. Type-1 seryl-tRNA synthetase subfamily. In terms of assembly, homodimer. The tRNA molecule binds across the dimer.

The protein resides in the cytoplasm. The catalysed reaction is tRNA(Ser) + L-serine + ATP = L-seryl-tRNA(Ser) + AMP + diphosphate + H(+). It carries out the reaction tRNA(Sec) + L-serine + ATP = L-seryl-tRNA(Sec) + AMP + diphosphate + H(+). The protein operates within aminoacyl-tRNA biosynthesis; selenocysteinyl-tRNA(Sec) biosynthesis; L-seryl-tRNA(Sec) from L-serine and tRNA(Sec): step 1/1. Catalyzes the attachment of serine to tRNA(Ser). Is also able to aminoacylate tRNA(Sec) with serine, to form the misacylated tRNA L-seryl-tRNA(Sec), which will be further converted into selenocysteinyl-tRNA(Sec). This Lactococcus lactis subsp. cremoris (strain SK11) protein is Serine--tRNA ligase.